We begin with the raw amino-acid sequence, 124 residues long: PPKDDKKKKDAGKSAKKDKDPVNKSGGKAKKKKWSKGKVRDKLNNLVLFDKATYDKLCKEVPNYKLITPAVVSERLKIRGSLARAALQELLSKGLIKLVSKHRAQVIYTRNTKGGDAPAAGEDA.

A compositionally biased stretch (basic and acidic residues) spans 1 to 22 (PPKDDKKKKDAGKSAKKDKDPV). A disordered region spans residues 1 to 37 (PPKDDKKKKDAGKSAKKDKDPVNKSGGKAKKKKWSKG). A compositionally biased stretch (basic residues) spans 27-37 (GKAKKKKWSKG). An N6-acetyllysine modification is found at Lys-42. Lys-51 carries the post-translational modification N6-acetyllysine; alternate. An N6-succinyllysine; alternate modification is found at Lys-51. An N6-acetyllysine mark is found at Lys-59 and Lys-65. Lys-93 is modified (N6-acetyllysine; alternate). An N6-succinyllysine; alternate modification is found at Lys-93.

Belongs to the eukaryotic ribosomal protein eS25 family. As to quaternary structure, component of the small ribosomal subunit.

The protein localises to the cytoplasm. Its function is as follows. Component of the small ribosomal subunit. The ribosome is a large ribonucleoprotein complex responsible for the synthesis of proteins in the cell. The chain is Small ribosomal subunit protein eS25 (RPS25) from Oryctolagus cuniculus (Rabbit).